Consider the following 34-residue polypeptide: Dermaseptin-H5 (34 aa).

In terms of tissue distribution, expressed by the skin glands.

The protein resides in the secreted. Functionally, has antimicrobial activity. The chain is Dermaseptin-H5 from Pithecopus hypochondrialis (Orange-legged leaf frog).